The chain runs to 438 residues: Histidinol dehydrogenase (438 aa).

The NAD(+) site is built by Tyr137, Gln198, and Asn221. Substrate-binding residues include Ser244, Gln266, and His269. Zn(2+)-binding residues include Gln266 and His269. Active-site proton acceptor residues include Glu334 and His335. Residues His335, Asp368, Glu422, and His427 each contribute to the substrate site. Residue Asp368 coordinates Zn(2+). His427 contributes to the Zn(2+) binding site.

Belongs to the histidinol dehydrogenase family. Zn(2+) serves as cofactor.

It carries out the reaction L-histidinol + 2 NAD(+) + H2O = L-histidine + 2 NADH + 3 H(+). Its pathway is amino-acid biosynthesis; L-histidine biosynthesis; L-histidine from 5-phospho-alpha-D-ribose 1-diphosphate: step 9/9. In terms of biological role, catalyzes the sequential NAD-dependent oxidations of L-histidinol to L-histidinaldehyde and then to L-histidine. In Aromatoleum aromaticum (strain DSM 19018 / LMG 30748 / EbN1) (Azoarcus sp. (strain EbN1)), this protein is Histidinol dehydrogenase.